The primary structure comprises 184 residues: UPF0301 protein RHOS4_26140 (184 aa).

This sequence belongs to the UPF0301 (AlgH) family.

The protein is UPF0301 protein RHOS4_26140 of Cereibacter sphaeroides (strain ATCC 17023 / DSM 158 / JCM 6121 / CCUG 31486 / LMG 2827 / NBRC 12203 / NCIMB 8253 / ATH 2.4.1.) (Rhodobacter sphaeroides).